The primary structure comprises 199 residues: MKLVLASASPRRREILKNITEDFIVVASDFDESLIEISRDIQSYVMVLAESKAKSTLCRIESEDFYKDEDEVFIIGCDTVVSIDGKILGKPKDEKEALDMLSELSGRTHEVYSGLAVLDAKKNKIIKDFQCTEVKFSEISYETILKYIACGEYADKAGAYGIQGKASVFVEEIKGSYYNVVGLPINKLYKILLGMGVNL.

Residue Asp-78 is the Proton acceptor of the active site.

The protein belongs to the Maf family. YhdE subfamily. The cofactor is a divalent metal cation.

Its subcellular location is the cytoplasm. The enzyme catalyses dTTP + H2O = dTMP + diphosphate + H(+). The catalysed reaction is UTP + H2O = UMP + diphosphate + H(+). Functionally, nucleoside triphosphate pyrophosphatase that hydrolyzes dTTP and UTP. May have a dual role in cell division arrest and in preventing the incorporation of modified nucleotides into cellular nucleic acids. The polypeptide is dTTP/UTP pyrophosphatase (Clostridium acetobutylicum (strain ATCC 824 / DSM 792 / JCM 1419 / IAM 19013 / LMG 5710 / NBRC 13948 / NRRL B-527 / VKM B-1787 / 2291 / W)).